Here is a 367-residue protein sequence, read N- to C-terminus: Phosphoribosylaminoimidazole-succinocarboxamide synthase (367 aa).

It belongs to the SAICAR synthetase family.

The catalysed reaction is 5-amino-1-(5-phospho-D-ribosyl)imidazole-4-carboxylate + L-aspartate + ATP = (2S)-2-[5-amino-1-(5-phospho-beta-D-ribosyl)imidazole-4-carboxamido]succinate + ADP + phosphate + 2 H(+). The protein operates within purine metabolism; IMP biosynthesis via de novo pathway; 5-amino-1-(5-phospho-D-ribosyl)imidazole-4-carboxamide from 5-amino-1-(5-phospho-D-ribosyl)imidazole-4-carboxylate: step 1/2. This chain is Phosphoribosylaminoimidazole-succinocarboxamide synthase, found in Aliivibrio salmonicida (strain LFI1238) (Vibrio salmonicida (strain LFI1238)).